The chain runs to 505 residues: Lysine--tRNA ligase (505 aa).

2 residues coordinate Mg(2+): E415 and E422.

Belongs to the class-II aminoacyl-tRNA synthetase family. In terms of assembly, homodimer. Mg(2+) serves as cofactor.

The protein resides in the cytoplasm. The enzyme catalyses tRNA(Lys) + L-lysine + ATP = L-lysyl-tRNA(Lys) + AMP + diphosphate. In Salmonella arizonae (strain ATCC BAA-731 / CDC346-86 / RSK2980), this protein is Lysine--tRNA ligase.